Here is a 1371-residue protein sequence, read N- to C-terminus: DNA-directed RNA polymerase subunit beta (1371 aa).

Belongs to the RNA polymerase beta chain family. In terms of assembly, the RNAP catalytic core consists of 2 alpha, 1 beta, 1 beta' and 1 omega subunit. When a sigma factor is associated with the core the holoenzyme is formed, which can initiate transcription.

It catalyses the reaction RNA(n) + a ribonucleoside 5'-triphosphate = RNA(n+1) + diphosphate. DNA-dependent RNA polymerase catalyzes the transcription of DNA into RNA using the four ribonucleoside triphosphates as substrates. The polypeptide is DNA-directed RNA polymerase subunit beta (Geobacter sp. (strain M21)).